A 207-amino-acid chain; its full sequence is MERESGCAAAGETEAAAATAFRDATRQISNERGFENVELGVMGKKKKVPRRVIHFVSGETMEEYSTDEDEVDGLDKKDVLPTVDPTKLTWGPYLWFYMLRAATSTLSVCDFLGEKIASVLGISTPKYQYAIDEYYRMKKEEEEEEEENRMSEEAERQYQQNKLQADSIVQTDQPETVSSSFVNINFEMEEDCEAIKENKQRPVSVPP.

The residue at position 1 (methionine 1) is an N-acetylmethionine. Serine 65 carries the post-translational modification Phosphoserine. The residue at position 66 (threonine 66) is a Phosphothreonine. Positions 131–170 (IDEYYRMKKEEEEEEEENRMSEEAERQYQQNKLQADSIVQ) form a coiled coil. Residues 142-176 (EEEEEENRMSEEAERQYQQNKLQADSIVQTDQPET) are disordered. Over residues 157–176 (QYQQNKLQADSIVQTDQPET) the composition is skewed to polar residues.

This sequence belongs to the FAM177 family.

The sequence is that of Protein FAM177A1 (Fam177a1) from Mus musculus (Mouse).